A 760-amino-acid polypeptide reads, in one-letter code: GLC7-interacting protein 4 (760 aa).

2 disordered regions span residues 449–573 (KKKP…SLQS) and 593–626 (KSAS…SSST). 2 stretches are compositionally biased toward low complexity: residues 454–474 (ITKL…ASPS) and 494–506 (SSRS…VRTT). Ser497 and Ser501 each carry phosphoserine. Positions 512–525 (AETKKSVVSPEKRK) are enriched in basic and acidic residues. The span at 534–554 (SSSLQSYTNKQQTSYLNSTRH) shows a compositional bias: polar residues. Low complexity-rich tracts occupy residues 561–573 (SKLN…SLQS) and 594–626 (SAST…SSST). Ser609 bears the Phosphoserine mark.

This sequence belongs to the GIP4 family. Interacts with GLC7.

Its subcellular location is the cytoplasm. Its function is as follows. GLC7 phosphatase-regulatory protein involved in GLC7 subcellular redistribution and chromosome segregation. This is GLC7-interacting protein 4 (GIP4) from Saccharomyces cerevisiae (strain ATCC 204508 / S288c) (Baker's yeast).